Here is a 642-residue protein sequence, read N- to C-terminus: Threonine--tRNA ligase (642 aa).

The TGS domain occupies 1–61 (MPVITLPDGS…ENDATLSIIT (61 aa)). A catalytic region spans residues 243 to 534 (DHRKIGKQLD…LTEEFAGFFP (292 aa)). Residues cysteine 334, histidine 385, and histidine 511 each contribute to the Zn(2+) site.

The protein belongs to the class-II aminoacyl-tRNA synthetase family. As to quaternary structure, homodimer. Zn(2+) serves as cofactor.

Its subcellular location is the cytoplasm. The enzyme catalyses tRNA(Thr) + L-threonine + ATP = L-threonyl-tRNA(Thr) + AMP + diphosphate + H(+). Catalyzes the attachment of threonine to tRNA(Thr) in a two-step reaction: L-threonine is first activated by ATP to form Thr-AMP and then transferred to the acceptor end of tRNA(Thr). Also edits incorrectly charged L-seryl-tRNA(Thr). The sequence is that of Threonine--tRNA ligase from Salmonella agona (strain SL483).